A 424-amino-acid polypeptide reads, in one-letter code: Argininosuccinate synthase (424 aa).

ATP-binding positions include 9–17 (AYSGGLDTS) and alanine 35. L-citrulline contacts are provided by tyrosine 86 and serine 91. 114–122 (SHGATGKGN) contacts ATP. L-aspartate is bound by residues threonine 118, asparagine 122, and aspartate 123. Residue asparagine 122 participates in L-citrulline binding. Residues arginine 126, serine 179, serine 188, glutamate 269, and tyrosine 281 each coordinate L-citrulline.

This sequence belongs to the argininosuccinate synthase family. Homotetramer.

It carries out the reaction L-citrulline + L-aspartate + ATP = 2-(N(omega)-L-arginino)succinate + AMP + diphosphate + H(+). Its pathway is amino-acid biosynthesis; L-arginine biosynthesis; L-arginine from L-ornithine and carbamoyl phosphate: step 2/3. It participates in nitrogen metabolism; urea cycle; (N(omega)-L-arginino)succinate from L-aspartate and L-citrulline: step 1/1. The polypeptide is Argininosuccinate synthase (Anopheles gambiae (African malaria mosquito)).